A 123-amino-acid polypeptide reads, in one-letter code: Small ribosomal subunit protein uS13 (123 aa).

The segment at leucine 96–lysine 123 is disordered.

This sequence belongs to the universal ribosomal protein uS13 family. In terms of assembly, part of the 30S ribosomal subunit. Forms a loose heterodimer with protein S19. Forms two bridges to the 50S subunit in the 70S ribosome.

Located at the top of the head of the 30S subunit, it contacts several helices of the 16S rRNA. In the 70S ribosome it contacts the 23S rRNA (bridge B1a) and protein L5 of the 50S subunit (bridge B1b), connecting the 2 subunits; these bridges are implicated in subunit movement. Contacts the tRNAs in the A and P-sites. The protein is Small ribosomal subunit protein uS13 of Desulforamulus reducens (strain ATCC BAA-1160 / DSM 100696 / MI-1) (Desulfotomaculum reducens).